Here is an 842-residue protein sequence, read N- to C-terminus: MTSIIKLKVFSGAKDEGPLCYLLQVDNDYILLDCGWDERFELKYFEELRPYIPKISAVLISHPDPLHLGGLPYLVAKCGLTAPVYCTVPVYKMGQMFIYDLVYSHLDVEEFQHYSLDDVDMAFEKVEQVKYNQTVVLKGDSGVNFTAMPAGHMIGGSMWRICRITGEDIIYCVDFNHRKDRHLSGCSFDNFNRPHLLITGAHHISLPQMKRKDRDEQLVTKILRTVRQKGDCMIVIDTAGRVLELAYLLDQLWANQDAGLSTYNLVMMSHVASSVVQFAKSQLEWMDEKLFRYDSSSARYNPFTLKNVNLVHSHLELIKIRSPKVVLCSSQDMETGFSRELFLDWCADQRNGVILTARPASFTLAARLVELAERANDGVLRNEDKHLSLLVRKRVPLEGEELLEYKRRKAERDAEETRIRMERARRQAQANESDDSDDDDIAAPIVPRLSEKDHRSFDAIENDSHCFDIMAKWDNQQKASFFKSTKKSFPMYPYIEEKVKWDDYGEVIKPEDYTVISKIDMRKGKNKDEPVVVHKREDEEEVYNPNDHDEEMPTKCVEFRNRIEISCRVEFIEYEGISDGESTKKMLAGLMPRQIIIVHGSRDDTRDLYAYFTDNGFKKDQLNTPVANELIDASVESFIYQVSLSDALLAEIQFKEVSEGNSLAWIDARIQEKESIDNMLVAGASQLTIEDSLQEDAVEVVEEDVIPMETFQDDQNKQEASEENVAEGEKSNGQSKENDENASSIPIETQPKIRGTLILTPLPKKQIPVHQAIFVNDPKLSEFKNLLVDKGYKAEFFSGTLLINGGKCSILVERLDSKWRVLSQKTFTNFGSCSTTSLLFCK.

Positions 414–425 are enriched in basic and acidic residues; sequence AEETRIRMERAR. Disordered stretches follow at residues 414 to 442 and 708 to 747; these read AEET…DDIA and METF…SIPI. Positions 432–441 are enriched in acidic residues; the sequence is ESDDSDDDDI. Positions 731 to 747 are enriched in polar residues; it reads SNGQSKENDENASSIPI.

This sequence belongs to the metallo-beta-lactamase superfamily. RNA-metabolizing metallo-beta-lactamase-like family. CPSF2/YSH1 subfamily. CPSF is a heterotetramer composed of four distinct subunits 160, 100, 70 and 30 kDa.

The protein resides in the nucleus. CPSF plays a key role in pre-mRNA 3'-end formation, recognizing the AAUAAA signal sequence and interacting with poly(A)polymerase and other factors to bring about cleavage and poly(A) addition. This is Probable cleavage and polyadenylation specificity factor subunit 2 from Caenorhabditis briggsae.